A 153-amino-acid polypeptide reads, in one-letter code: Nuclear cap-binding protein subunit 2 (153 aa).

MRNA contacts are provided by residues Y17, Y40, 109-113 (RTDWD), 120-124 (RQYGR), and 130-131 (QV). An RRM domain is found at 37–115 (CTLYVGNLSF…RIVRTDWDAG (79 aa)).

It belongs to the RRM NCBP2 family. Component of the nuclear cap-binding complex (CBC), a heterodimer composed of ncbp1/cbp80 and ncbp2/cbp20 that interacts with m7GpppG-capped RNA.

The protein resides in the nucleus. The protein localises to the cytoplasm. Its function is as follows. Component of the cap-binding complex (CBC), which binds co-transcriptionally to the 5' cap of pre-mRNAs and is involved in various processes such as pre-mRNA splicing, translation regulation, nonsense-mediated mRNA decay, RNA-mediated gene silencing (RNAi) by microRNAs (miRNAs) and mRNA export. The CBC complex is involved in mRNA export from the nucleus, leading to the recruitment of the mRNA export machinery to the 5' end of mRNA and to mRNA export in a 5' to 3' direction through the nuclear pore. The CBC complex is also involved in mediating U snRNA and intronless mRNAs export from the nucleus. The CBC complex is essential for a pioneer round of mRNA translation, before steady state translation when the CBC complex is replaced by cytoplasmic cap-binding protein eIF4E. The pioneer round of mRNA translation mediated by the CBC complex plays a central role in nonsense-mediated mRNA decay (NMD), NMD only taking place in mRNAs bound to the CBC complex, but not on eIF4E-bound mRNAs. The CBC complex enhances NMD in mRNAs containing at least one exon-junction complex (EJC), promoting the interaction between upf1 and upf2. The CBC complex is also involved in 'failsafe' NMD, which is independent of the EJC complex, while it does not participate in Staufen-mediated mRNA decay (SMD). During cell proliferation, the CBC complex is also involved in microRNAs (miRNAs) biogenesis via its interaction with srrt/ars2, thereby being required for miRNA-mediated RNA interference. The CBC complex also acts as a negative regulator of parn, thereby acting as an inhibitor of mRNA deadenylation. In the CBC complex, ncbp2/cbp20 recognizes and binds capped RNAs (m7GpppG-capped RNA) but requires ncbp1/cbp80 to stabilize the movement of its N-terminal loop and lock the CBC into a high affinity cap-binding state with the cap structure. The conventional cap-binding complex with NCBP2 binds both small nuclear RNA (snRNA) and messenger (mRNA) and is involved in their export from the nucleus. This is Nuclear cap-binding protein subunit 2 (ncbp2) from Xenopus laevis (African clawed frog).